The sequence spans 312 residues: Ribonuclease HIII (312 aa).

In terms of domain architecture, RNase H type-2 spans 95–312 (MSILGSDEVG…TEKAFRLLKK (218 aa)). The a divalent metal cation site is built by D101, E102, and D206.

This sequence belongs to the RNase HII family. RnhC subfamily. Mn(2+) is required as a cofactor. It depends on Mg(2+) as a cofactor.

It is found in the cytoplasm. The enzyme catalyses Endonucleolytic cleavage to 5'-phosphomonoester.. Its function is as follows. Endonuclease that specifically degrades the RNA of RNA-DNA hybrids. The polypeptide is Ribonuclease HIII (Bacillus mycoides (strain KBAB4) (Bacillus weihenstephanensis)).